The following is a 414-amino-acid chain: S-adenosylmethionine synthase (414 aa).

Position 11 (His-11) interacts with ATP. Asp-13 serves as a coordination point for Mg(2+). Glu-39 is a K(+) binding site. 2 residues coordinate L-methionine: Glu-52 and Gln-95. The flexible loop stretch occupies residues 95 to 105 (QSPDIAQGVNL). Residues 169–171 (DGK), 245–246 (KF), Asp-254, 260–261 (RK), Ala-277, and Lys-281 each bind ATP. Asp-254 lines the L-methionine pocket. Lys-285 serves as a coordination point for L-methionine.

It belongs to the AdoMet synthase family. Homotetramer; dimer of dimers. Mg(2+) is required as a cofactor. The cofactor is K(+).

It localises to the cytoplasm. The enzyme catalyses L-methionine + ATP + H2O = S-adenosyl-L-methionine + phosphate + diphosphate. It functions in the pathway amino-acid biosynthesis; S-adenosyl-L-methionine biosynthesis; S-adenosyl-L-methionine from L-methionine: step 1/1. Its function is as follows. Catalyzes the formation of S-adenosylmethionine (AdoMet) from methionine and ATP. The overall synthetic reaction is composed of two sequential steps, AdoMet formation and the subsequent tripolyphosphate hydrolysis which occurs prior to release of AdoMet from the enzyme. This is S-adenosylmethionine synthase from Synechococcus sp. (strain JA-3-3Ab) (Cyanobacteria bacterium Yellowstone A-Prime).